A 130-amino-acid polypeptide reads, in one-letter code: Small ribosomal subunit protein uS8 (130 aa).

It belongs to the universal ribosomal protein uS8 family. Part of the 30S ribosomal subunit. Contacts proteins S5 and S12.

In terms of biological role, one of the primary rRNA binding proteins, it binds directly to 16S rRNA central domain where it helps coordinate assembly of the platform of the 30S subunit. This is Small ribosomal subunit protein uS8 from Alteromonas mediterranea (strain DSM 17117 / CIP 110805 / LMG 28347 / Deep ecotype).